The following is a 567-amino-acid chain: Pyrethroid hydrolase Ces2e (567 aa).

The first 36 residues, Met-1–Gly-36, serve as a signal peptide directing secretion. The residue at position 37 (Gln-37) is a Pyrrolidone carboxylic acid. Cys-105 and Cys-132 are oxidised to a cystine. Ser-237 (acyl-ester intermediate) is an active-site residue. Cys-289 and Cys-300 are disulfide-bonded. Active-site charge relay system residues include Glu-354 and His-465.

This sequence belongs to the type-B carboxylesterase/lipase family. As to expression, expressed in liver.

Its subcellular location is the microsome. The catalysed reaction is all-trans-retinyl hexadecanoate + H2O = all-trans-retinol + hexadecanoate + H(+). It carries out the reaction (-)-trans-permethrin + H2O = (3-phenoxyphenyl)methanol + (1S,3R)-3-(2,2-dichlorovinyl)-2,2-dimethylcyclopropanecarboxylate + H(+). Its function is as follows. Carboxylesterase that catalyzes the hydrolysis of pyrethroids pesticides. Hydrolyzes trans-permethrin at a rate about 22-fold higher than cis-permethrin. Also hydrolyzes trans-cypermethrin. Hydrolyzes retinyl esters. The sequence is that of Pyrethroid hydrolase Ces2e from Rattus norvegicus (Rat).